A 144-amino-acid chain; its full sequence is Small ribosomal subunit protein uS11c (144 aa).

Belongs to the universal ribosomal protein uS11 family. Part of the 30S ribosomal subunit.

The protein resides in the plastid. Its subcellular location is the chloroplast. The chain is Small ribosomal subunit protein uS11c from Oenothera biennis (German evening primrose).